A 443-amino-acid polypeptide reads, in one-letter code: Glucose-6-phosphate isomerase (443 aa).

The active-site Proton donor is the E285. Residues H306 and K420 contribute to the active site.

The protein belongs to the GPI family.

The protein resides in the cytoplasm. It catalyses the reaction alpha-D-glucose 6-phosphate = beta-D-fructose 6-phosphate. The protein operates within carbohydrate biosynthesis; gluconeogenesis. It functions in the pathway carbohydrate degradation; glycolysis; D-glyceraldehyde 3-phosphate and glycerone phosphate from D-glucose: step 2/4. In terms of biological role, catalyzes the reversible isomerization of glucose-6-phosphate to fructose-6-phosphate. The sequence is that of Glucose-6-phosphate isomerase from Staphylococcus epidermidis (strain ATCC 12228 / FDA PCI 1200).